The primary structure comprises 160 residues: Large ribosomal subunit protein uL22c (160 aa).

The protein belongs to the universal ribosomal protein uL22 family. Part of the 50S ribosomal subunit.

The protein resides in the plastid. The protein localises to the chloroplast. Functionally, this protein binds specifically to 23S rRNA. Its function is as follows. The globular domain of the protein is located near the polypeptide exit tunnel on the outside of the subunit, while an extended beta-hairpin is found that lines the wall of the exit tunnel in the center of the 70S ribosome. The protein is Large ribosomal subunit protein uL22c (rpl22) of Aethionema cordifolium (Lebanon stonecress).